The primary structure comprises 260 residues: Emerin (260 aa).

Met-1 is modified (N-acetylmethionine). The region spanning 1–45 is the LEM domain; the sequence is MDDYAVLSDTELAAVLRQYNIPHGPILGSTRKLYEKKIFEYETQR. Residues Ser-8 and Ser-29 each carry the phosphoserine modification. An interaction with F-actin region spans residues 46–224; the sequence is RRLSPPSSSS…PTAALGQDRQ (179 aa). Position 49 is a phosphoserine; by PKA (Ser-49). Ser-54, Ser-69, Ser-72, Ser-88, Ser-99, Ser-142, Ser-143, and Ser-144 each carry phosphoserine. The residue at position 162 (Tyr-162) is a Phosphotyrosine. An interaction with CTNNB1 region spans residues 169-188; it reads RPISNVSRSSLGLSYYPRSS. Phosphoserine is present on residues Ser-172, Ser-175, and Ser-177. Positions 184–206 are disordered; that stretch reads YPRSSTSSVSSSSSSPSSWLTRR. Residues 187-201 show a composition bias toward low complexity; sequence SSTSSVSSSSSSPSS. The chain crosses the membrane as a helical span at residues 225–245; that stretch reads VPLWGQLLLFLAFATFLLFVY.

As to quaternary structure, interacts with lamins A and C, BANF1, GMCL, BCLAF1 and YTHDC1/YT521. Interacts with TMEM43; the interaction retains emerin in the inner nuclear membrane. Interacts with ACTB, SPTAN1, F-actin, CTNNB1 and beta-tubulin. Interacts with SUN1 and SUN2. Interacts with TMEM201. Interacts with NEMP1.

The protein localises to the nucleus inner membrane. Its subcellular location is the nucleus outer membrane. Its function is as follows. Stabilizes and promotes the formation of a nuclear actin cortical network. Stimulates actin polymerization in vitro by binding and stabilizing the pointed end of growing filaments. Inhibits beta-catenin activity by preventing its accumulation in the nucleus. Acts by influencing the nuclear accumulation of beta-catenin through a CRM1-dependent export pathway. Links centrosomes to the nuclear envelope via a microtubule association. Required for proper localization of non-farnesylated prelamin-A/C. Together with NEMP1, contributes to nuclear envelope stiffness in germ cells. The polypeptide is Emerin (Emd) (Rattus norvegicus (Rat)).